Reading from the N-terminus, the 508-residue chain is p-aminobenzoyl-glutamate transport protein (508 aa).

A run of 13 helical transmembrane segments spans residues 30-50 (FLLFIYLIIVLMVTTAILSAF), 85-105 (FSGFAPLGAILALVLGAGLAE), 121-139 (VNARYASYMVLFIAFFSHI), 140-159 (SSDAALVIMPPMGALIFLAV), 164-184 (VAGLLAAIAGVGCGFTANLLI), 211-231 (IDNWYFMASSVVVLTIVGGLI), 261-281 (GLRIAGVVSLLFIAAIALMVI), 303-323 (GIVPLIILFFFVVSLAYGIAT), 343-363 (MAGFIVMVFPLAQFVAMFNWS), 382-402 (LSGIPAFVGLALLSSFLCMFI), 405-425 (GSAIWSILAPIFVPMFMLLGF), 439-459 (SSVLPLAPVSPFVPLFLGFLQ), and 479-499 (LIFLVVWLLMLLAWYLVGLPI).

It is found in the cell inner membrane. It catalyses the reaction N-(4-aminobenzoyl)-L-glutamate(in) + H(+)(in) = N-(4-aminobenzoyl)-L-glutamate(out) + H(+)(out). Its activity is regulated as follows. Completely inhibited by 100 nM sodium azide and by the proton ionophore carbonyl cyanide m-chlorophenylhydrazone (CCCP). Is also strongly inhibited by 100 mM potassium fluoride. In terms of biological role, essential for aminobenzoyl-glutamate utilization. It catalyzes the concentration-dependent uptake of p-aminobenzoyl-glutamate (PABA-GLU) into the cell and allows accumulation of PABA-GLU to a concentration enabling AbgAB to catalyze cleavage into p-aminobenzoate and glutamate. It also seems to increase the sensitivity to low levels of aminobenzoyl-glutamate. May actually serve physiologically as a transporter for some other molecule, perhaps a dipeptide, and that it transports p-aminobenzoyl-glutamate as a secondary activity. The physiological role of abgABT should be clarified. The polypeptide is p-aminobenzoyl-glutamate transport protein (Escherichia coli (strain K12)).